Here is a 129-residue protein sequence, read N- to C-terminus: Glycine cleavage system H protein (129 aa).

One can recognise a Lipoyl-binding domain in the interval 24-106; the sequence is SYTVGITEHA…YGEGWFFRVM (83 aa). Residue K65 is modified to N6-lipoyllysine.

It belongs to the GcvH family. As to quaternary structure, the glycine cleavage system is composed of four proteins: P, T, L and H. The cofactor is (R)-lipoate.

In terms of biological role, the glycine cleavage system catalyzes the degradation of glycine. The H protein shuttles the methylamine group of glycine from the P protein to the T protein. In Shewanella baltica (strain OS185), this protein is Glycine cleavage system H protein.